The sequence spans 352 residues: Secreted RxLR effector protein 122 (352 aa).

Residues 1 to 21 form the signal peptide; that stretch reads MRGAYYVLIALLVVASSQTSA. The RxLR-dEER signature appears at 48–65; the sequence is QFLRGSRNVPGDLAHEER. The segment covering 280 to 290 has biased composition (low complexity); the sequence is RGGTTGASRGT. The segment at 280 to 352 is disordered; sequence RGGTTGASRG…VEPEGHRSKP (73 aa). A compositionally biased stretch (polar residues) spans 302–315; the sequence is AASTSKGKSSVFTE.

Belongs to the RxLR effector family.

It is found in the secreted. It localises to the host nucleus. Functionally, secreted effector that acts as an elicitor that induces cell death in host plant cells. The polypeptide is Secreted RxLR effector protein 122 (Plasmopara viticola (Downy mildew of grapevine)).